A 488-amino-acid chain; its full sequence is MAASATATVGTKGIVRQVIGPVLDVEFPAGKLPSILNALRIEGKNPAGQDVALTAEVQQLLGDHRVRAVAMSGTDGLVRGMEALDTGAPISVPVGEATLGRIFNVLGEPVDEQGDLKNVTTSPIHRSAPSLTDLETKPKVFETGIKVIDLLAPYRQGGKVGLFGGAGVGKTVLIQELINNIAKEHGGVSVFGGVGERTREGNDLYEEFKESGVINSEDLTKSKVALCFGQMNEPPGARMRVGLSALTMAEHFRDVNKQDVLLFIDNIFRFVQAGSEVSALLGRMPSAVGYQPTLGTDVGELQERITSTLEGSITSIQAVYVPADDLTDPAPATTFAHLDATTVLARALAAKGIYPAVDPLDSTSTMLQPSVVGDEHYRTARAVQSTLQRYKELQDIIAILGLDELSEEDRKTVDRARKIEKFLSQPFFVAEIFTGMSGKYVKLEDTIKGFNMILSGELDQLPEQAFYLVGSIDEVKAKAEKLASEAKA.

An ATP-binding site is contributed by 164–171 (GGAGVGKT).

It belongs to the ATPase alpha/beta chains family. In terms of assembly, F-type ATPases have 2 components, CF(1) - the catalytic core - and CF(0) - the membrane proton channel. CF(1) has five subunits: alpha(3), beta(3), gamma(1), delta(1), epsilon(1). CF(0) has four main subunits: a(1), b(1), b'(1) and c(9-12).

The protein localises to the cellular thylakoid membrane. It carries out the reaction ATP + H2O + 4 H(+)(in) = ADP + phosphate + 5 H(+)(out). In terms of biological role, produces ATP from ADP in the presence of a proton gradient across the membrane. The catalytic sites are hosted primarily by the beta subunits. This chain is ATP synthase subunit beta, found in Prochlorococcus marinus (strain NATL1A).